The following is a 145-amino-acid chain: D-aminoacyl-tRNA deacylase (145 aa).

A Gly-cisPro motif, important for rejection of L-amino acids motif is present at residues 137 to 138 (GP).

This sequence belongs to the DTD family. Homodimer.

Its subcellular location is the cytoplasm. The catalysed reaction is glycyl-tRNA(Ala) + H2O = tRNA(Ala) + glycine + H(+). It catalyses the reaction a D-aminoacyl-tRNA + H2O = a tRNA + a D-alpha-amino acid + H(+). An aminoacyl-tRNA editing enzyme that deacylates mischarged D-aminoacyl-tRNAs. Also deacylates mischarged glycyl-tRNA(Ala), protecting cells against glycine mischarging by AlaRS. Acts via tRNA-based rather than protein-based catalysis; rejects L-amino acids rather than detecting D-amino acids in the active site. By recycling D-aminoacyl-tRNA to D-amino acids and free tRNA molecules, this enzyme counteracts the toxicity associated with the formation of D-aminoacyl-tRNA entities in vivo and helps enforce protein L-homochirality. The sequence is that of D-aminoacyl-tRNA deacylase from Shewanella loihica (strain ATCC BAA-1088 / PV-4).